The following is a 55-amino-acid chain: Neurotoxin BmP08 (55 aa).

An N-terminal signal peptide occupies residues 1-23; it reads MKIFFAVLVILVLFSMLIWTAYG. 3 disulfides stabilise this stretch: cysteine 30–cysteine 45, cysteine 36–cysteine 50, and cysteine 39–cysteine 53.

As to expression, expressed by the venom gland.

Its subcellular location is the secreted. This is Neurotoxin BmP08 from Olivierus martensii (Manchurian scorpion).